Here is a 543-residue protein sequence, read N- to C-terminus: CTP synthase (543 aa).

Residues 1–266 (MTKFIFVTGG…DDIICERFGI (266 aa)) form an amidoligase domain region. Ser-13 is a binding site for CTP. Ser-13 is a UTP binding site. Residues 14-19 (SLGKGI) and Asp-71 each bind ATP. Residues Asp-71 and Glu-140 each coordinate Mg(2+). Residues 147 to 149 (DIE), 187 to 192 (KTKPTQ), and Lys-223 each bind CTP. UTP contacts are provided by residues 187–192 (KTKPTQ) and Lys-223. Residues 291–543 (TVAIVGKYVE…VKAAIDHQNI (253 aa)) form the Glutamine amidotransferase type-1 domain. Gly-354 serves as a coordination point for L-glutamine. The active-site Nucleophile; for glutamine hydrolysis is Cys-381. Residues 382–385 (LGMQ), Glu-404, and Arg-471 contribute to the L-glutamine site. Residues His-516 and Glu-518 contribute to the active site.

Belongs to the CTP synthase family. In terms of assembly, homotetramer.

The catalysed reaction is UTP + L-glutamine + ATP + H2O = CTP + L-glutamate + ADP + phosphate + 2 H(+). It catalyses the reaction L-glutamine + H2O = L-glutamate + NH4(+). It carries out the reaction UTP + NH4(+) + ATP = CTP + ADP + phosphate + 2 H(+). It functions in the pathway pyrimidine metabolism; CTP biosynthesis via de novo pathway; CTP from UDP: step 2/2. Allosterically activated by GTP, when glutamine is the substrate; GTP has no effect on the reaction when ammonia is the substrate. The allosteric effector GTP functions by stabilizing the protein conformation that binds the tetrahedral intermediate(s) formed during glutamine hydrolysis. Inhibited by the product CTP, via allosteric rather than competitive inhibition. In terms of biological role, catalyzes the ATP-dependent amination of UTP to CTP with either L-glutamine or ammonia as the source of nitrogen. Regulates intracellular CTP levels through interactions with the four ribonucleotide triphosphates. This is CTP synthase from Psychrobacter sp. (strain PRwf-1).